Consider the following 182-residue polypeptide: ADP-ribosylation factor 1 (182 aa).

A lipid anchor (N-myristoyl glycine) is attached at Gly2. GTP is bound by residues 24 to 31 (GLDAAGKT), 67 to 71 (DVGGQ), and 126 to 129 (NKQD).

Belongs to the small GTPase superfamily. Arf family.

The protein resides in the golgi apparatus. It carries out the reaction GTP + H2O = GDP + phosphate + H(+). In terms of biological role, GTP-binding protein involved in protein trafficking; may modulate vesicle budding and uncoating within the Golgi apparatus. In Dictyostelium discoideum (Social amoeba), this protein is ADP-ribosylation factor 1 (arfA).